Here is a 514-residue protein sequence, read N- to C-terminus: Thymus-specific serine protease (514 aa).

An N-terminal signal peptide occupies residues methionine 1–alanine 24. N-linked (GlcNAc...) asparagine glycosylation is found at asparagine 70 and asparagine 172. The active-site Charge relay system is serine 185. N-linked (GlcNAc...) asparagine glycosylation is present at asparagine 321. Residues aspartate 447 and histidine 472 each act as charge relay system in the active site.

Belongs to the peptidase S28 family. In terms of tissue distribution, expressed predominantly in cortical thymic epithelial cells.

The protein localises to the cytoplasmic vesicle. Protease that may play a role in T-cell development. The chain is Thymus-specific serine protease (PRSS16) from Homo sapiens (Human).